The chain runs to 266 residues: Integral membrane protein 2B (266 aa).

Over 1-54 (MVKVTFNSALAQKEAKKDEPKSSEEALIVPPDAVAVDCKDPGDVVPVGQRRAWC) the chain is Cytoplasmic. A helical; Signal-anchor for type II membrane protein membrane pass occupies residues 55–75 (WCMCFGLAFMLAGVILGGAYL). Residues 76–266 (YKYFALQPDD…KFAVETLICS (191 aa)) lie on the Lumenal side of the membrane. Positions 102-134 (EPSADAPAARYQTIEENIKIFEEDAVEFISVPV) are necessary for interaction with APP and inhibitor effects on APP processing. A BRICHOS domain is found at 137-231 (FADSDPANIV…LCHDKETYKL (95 aa)). Cystine bridges form between Cys164–Cys223 and Cys248–Cys265. Asn170 carries an N-linked (GlcNAc...) asparagine glycan.

This sequence belongs to the ITM2 family. Homodimer; disulfide-linked. Interacts with SPPL2A and SPPL2B. Interacts with APP. Mature BRI2 (mBRI2) interacts with the APP amyloid-beta A4 protein; the interaction occurs at the cell surface and in the endocytic compartments and enable alpha- and beta-secretase-induced APP cleavage inhibition. Mature BRI2 (mBRI2) interacts with the APP C99; the interaction occurs in the endocytic compartments and enable gamma-secretase-induced C99 cleavage inhibition. May form heterodimers with Bri23 peptide and APP amyloid-beta protein 40. Interacts with ADAM7 in sperm; the interaction increases following capacitation. Post-translationally, the ectodomain C-terminal part of the imBRI2 is processed by furin producing a secreted Bri23 peptide and a mature BRI2, membrane form (mBRI2). The remaining part of the ectodomain of mBRI2 containing the BRICHOS domain is cleaved by ADAM10 and is secreted (BRI2C, soluble form). The membrane-bound N-terminal fragment (BRI2C, membrane form) is further proteolytically processed by SPPL2A and SPPL2B through regulated intramembrane proteolysis producing a secreted C-peptide and a BRI2 intracellular domain (BRI2 ICD) released in the cytosol. Shedding by ADAM10 facilitates intramembrane cleavage but is not absolutely required for BRI2 ICD generation. Glycosylation at Asn-170 is important for cell surface localization, but doesn't affect furin- and ADAM10-induced proteolytic processing. In terms of tissue distribution, expressed in the brain, testis, testicular sperm, epididymis and mature epididymal sperm (at protein level).

It is found in the golgi apparatus membrane. The protein resides in the cell membrane. It localises to the endosome membrane. The protein localises to the secreted. Its function is as follows. Plays a regulatory role in the processing of the amyloid-beta A4 precursor protein (APP) and acts as an inhibitor of the amyloid-beta peptide aggregation and fibrils deposition. Plays a role in the induction of neurite outgrowth. Functions as a protease inhibitor by blocking access of secretases to APP cleavage sites. Functionally, mature BRI2 (mBRI2) functions as a modulator of the amyloid-beta A4 precursor protein (APP) processing leading to a strong reduction in the secretion of secretase-processed amyloid-beta protein 40 and amyloid-beta protein 42. Bri23 peptide prevents aggregation of APP amyloid-beta protein 42 into toxic oligomers. The chain is Integral membrane protein 2B (Itm2b) from Mus musculus (Mouse).